The chain runs to 570 residues: Mitoguardin 1 (570 aa).

The chain crosses the membrane as a helical span at residues 34-54; that stretch reads GLKKIIAVAAISGVSLIFLAC.

It belongs to the mitoguardin family. As to quaternary structure, homodimer and heterodimer; forms heterodimers with miga2.

The protein localises to the mitochondrion outer membrane. Its function is as follows. Regulator of mitochondrial fusion: acts by forming homo- and heterodimers at the mitochondrial outer membrane and facilitating the formation of pld6/MitoPLD dimers. May act by regulating phospholipid metabolism via pld6/MitoPLD. This is Mitoguardin 1 from Xenopus laevis (African clawed frog).